The chain runs to 354 residues: Rhodopsin (354 aa).

At 1 to 36 (MNGTEGPYFYIPMVNTTGIVRSPYEYPQYYLVNPAA) the chain is on the extracellular side. Asparagine 2 and asparagine 15 each carry an N-linked (GlcNAc...) asparagine glycan. The helical transmembrane segment at 37–61 (YAALGAYMFFLILLGFPINFLTLYV) threads the bilayer. The Cytoplasmic portion of the chain corresponds to 62–73 (TLEHKKLRTPLN). Residues 74–96 (YILLNLAVADLFMVFGGFTTTMY) form a helical membrane-spanning segment. Over 97–110 (TSMHGYFVLGRLGC) the chain is Extracellular. An intrachain disulfide couples cysteine 110 to cysteine 187. A helical membrane pass occupies residues 111 to 133 (NLEGFFATLGGEIGLWSLVVLAI). A 'Ionic lock' involved in activated form stabilization motif is present at residues 134-136 (ERW). Residues 134-152 (ERWVVVCKPISNFRFGENH) are Cytoplasmic-facing. Residues 153–173 (AIMGLAFTWIMACACAVPPLV) traverse the membrane as a helical segment. At 174 to 202 (GWSRYIPEGMQCSCGVDYYTRAEGFNNES) the chain is on the extracellular side. N-linked (GlcNAc...) asparagine glycosylation is present at asparagine 200. A helical transmembrane segment spans residues 203–224 (FVVYMFTCHFCIPLTIIGFCYG). The Cytoplasmic portion of the chain corresponds to 225–252 (RLLCAVKEAAAAQQESETTQRAEREVTR). Residues 253–274 (MVILMVVGFLVCWLPYASVAWY) traverse the membrane as a helical segment. Residues 275–286 (IFSNQGSQFGPL) are Extracellular-facing. A helical transmembrane segment spans residues 287-308 (FMTIPAFFAKSSSVYNPMIYIC). At lysine 296 the chain carries N6-(retinylidene)lysine. Topologically, residues 309 to 354 (MNKQFRHCMITTLCCGKNPFEEEEGASTTASKTEASSVSSSSVSPA) are cytoplasmic. Residues cysteine 322 and cysteine 323 are each lipidated (S-palmitoyl cysteine). Residues 333 to 354 (GASTTASKTEASSVSSSSVSPA) are disordered. The span at 334-354 (ASTTASKTEASSVSSSSVSPA) shows a compositional bias: low complexity.

It belongs to the G-protein coupled receptor 1 family. Opsin subfamily. In terms of processing, phosphorylated on some or all of the serine and threonine residues present in the C-terminal region. Contains one covalently linked retinal chromophore.

The protein localises to the membrane. The protein resides in the cell projection. It is found in the cilium. Its subcellular location is the photoreceptor outer segment. Functionally, photoreceptor required for image-forming vision at low light intensity. While most salt water fish species use retinal as chromophore, most freshwater fish use 3-dehydroretinal, or a mixture of retinal and 3-dehydroretinal. Light-induced isomerization of 11-cis to all-trans retinal triggers a conformational change that activates signaling via G-proteins. Subsequent receptor phosphorylation mediates displacement of the bound G-protein alpha subunit by arrestin and terminates signaling. This chain is Rhodopsin (rho), found in Salaria pavo (Peacock blenny).